Here is a 1161-residue protein sequence, read N- to C-terminus: ATP-dependent helicase/deoxyribonuclease subunit B (1161 aa).

It belongs to the helicase family. AddB/RexB type 2 subfamily. In terms of assembly, heterodimer of AddA and RexB. The cofactor is Mg(2+).

In terms of biological role, the heterodimer acts as both an ATP-dependent DNA helicase and an ATP-dependent, dual-direction single-stranded exonuclease. Recognizes the chi site generating a DNA molecule suitable for the initiation of homologous recombination. This subunit has 5' -&gt; 3' nuclease activity but not helicase activity. This Oenococcus oeni (strain ATCC BAA-331 / PSU-1) protein is ATP-dependent helicase/deoxyribonuclease subunit B.